The sequence spans 236 residues: Small ribosomal subunit protein uS2c (236 aa).

Belongs to the universal ribosomal protein uS2 family.

The protein localises to the plastid. The protein resides in the chloroplast. The polypeptide is Small ribosomal subunit protein uS2c (rps2) (Ipomoea purpurea (Common morning glory)).